The primary structure comprises 212 residues: Ferric nitrobindin-like protein (212 aa).

Positions Met1–Ser11 are enriched in basic and acidic residues. Positions Met1–Asp36 are disordered. Residues Gly64–Gly70 carry the GXWXGXG motif.

The protein belongs to the nitrobindin family.

This is Ferric nitrobindin-like protein from Saccharopolyspora erythraea (strain ATCC 11635 / DSM 40517 / JCM 4748 / NBRC 13426 / NCIMB 8594 / NRRL 2338).